The chain runs to 135 residues: Interleukin-5 (135 aa).

The first 19 residues, 1-19 (MRVLLQLGLLALGAVCVCA), serve as a signal peptide directing secretion. N-linked (GlcNAc...) asparagine glycosylation is found at Asn48, Asn77, and Asn91.

It belongs to the IL-5 family. Homodimer; disulfide-linked. Interacts with IL5RA. Interacts with CSF2RB.

The protein localises to the secreted. Its function is as follows. Homodimeric cytokine expressed predominantly by T-lymphocytes and NK cells that plays an important role in the survival, differentiation, and chemotaxis of eosinophils. Also acts on activated and resting B-cells to induce immunoglobulin production, growth, and differentiation. Mechanistically, exerts its biological effects through a receptor composed of IL5RA subunit and the cytokine receptor common subunit beta/CSF2RB. Binding to the receptor leads to activation of various kinases including LYN, SYK and JAK2 and thereby propagates signals through the RAS-MAPK and JAK-STAT5 pathways respectively. The protein is Interleukin-5 (IL5) of Cavia porcellus (Guinea pig).